The chain runs to 197 residues: Fucoxanthin-chlorophyll a-c binding protein F, chloroplastic (197 aa).

A chloroplast-targeting transit peptide spans Met-1–Met-31. 3 helical membrane passes run Ile-73–Ile-94, Ile-114–Met-134, and Gly-174–Pro-196.

It belongs to the fucoxanthin chlorophyll protein family. The LHC complex of chromophytic algae is composed of fucoxanthin, chlorophyll A and C bound non-covalently by fucoxanthin chlorophyll proteins (FCPs). The ratio of the pigments in lhc; fucoxanthin: chlorophyll C: chlorophyll A is (0.6-1): (0.1-0.3): (1).

Its subcellular location is the plastid. The protein localises to the chloroplast thylakoid membrane. The light-harvesting complex (LHC) functions as a light receptor, it captures and delivers excitation energy to photosystems with which it is closely associated. In chromophytic algae, LHC is associated with photosystem II, energy being transferred from fucoxanthin and chlorophyll C to chlorophyll A and the photosynthetic reaction centers where it is used to synthesize ATP and reducing power. The protein is Fucoxanthin-chlorophyll a-c binding protein F, chloroplastic (FCPF) of Phaeodactylum tricornutum (Diatom).